The sequence spans 126 residues: Small ribosomal subunit protein uS13 (126 aa).

Residues 101–126 (QKTKNNCRTRKGKKKTVANKKKKINK) are disordered.

It belongs to the universal ribosomal protein uS13 family. Part of the 30S ribosomal subunit. Forms a loose heterodimer with protein S19. Forms two bridges to the 50S subunit in the 70S ribosome.

In terms of biological role, located at the top of the head of the 30S subunit, it contacts several helices of the 16S rRNA. In the 70S ribosome it contacts the 23S rRNA (bridge B1a) and protein L5 of the 50S subunit (bridge B1b), connecting the 2 subunits; these bridges are implicated in subunit movement. Contacts the tRNAs in the A and P-sites. The sequence is that of Small ribosomal subunit protein uS13 from Karelsulcia muelleri (strain GWSS) (Sulcia muelleri).